The sequence spans 110 residues: Small ribosomal subunit protein bS16 (110 aa).

The disordered stretch occupies residues 79–110 (AAGVKKREARNNPQKAVPRKERKAQAEAAAKG).

Belongs to the bacterial ribosomal protein bS16 family.

This chain is Small ribosomal subunit protein bS16, found in Bradyrhizobium diazoefficiens (strain JCM 10833 / BCRC 13528 / IAM 13628 / NBRC 14792 / USDA 110).